The following is a 413-amino-acid chain: NAD(P)H oxidoreductase RTN4IP1, mitochondrial (413 aa).

A mitochondrion-targeting transit peptide spans Met1–Tyr23. A disordered region spans residues Ala27–Met52. Polar residues predominate over residues Leu31–Ala40. The 345-residue stretch at Gly61–Val405 folds into the Enoyl reductase (ER) domain. The NADPH site is built by Ser228, Gly230, Val231, Ser251, Tyr269, Gly353, Phe355, His398, and Arg400.

It belongs to the zinc-containing alcohol dehydrogenase family. Quinone oxidoreductase subfamily.

Its subcellular location is the mitochondrion matrix. The catalysed reaction is a quinone + NADH + H(+) = a quinol + NAD(+). It catalyses the reaction a quinone + NADPH + H(+) = a quinol + NADP(+). It functions in the pathway cofactor biosynthesis; ubiquinone biosynthesis. Its function is as follows. NAD(P)H oxidoreductase. Involved in the ubiquinone biosynthetic pathway. This Drosophila melanogaster (Fruit fly) protein is NAD(P)H oxidoreductase RTN4IP1, mitochondrial.